We begin with the raw amino-acid sequence, 359 residues long: 3-isopropylmalate dehydrogenase (359 aa).

74–85 (GPKWGTGSVRPE) contributes to the NAD(+) binding site. Residues Arg92, Arg102, Arg131, and Asp220 each contribute to the substrate site. 3 residues coordinate Mg(2+): Asp220, Asp245, and Asp249. An NAD(+)-binding site is contributed by 284-295 (GSAPDLPANKVN).

The protein belongs to the isocitrate and isopropylmalate dehydrogenases family. As to quaternary structure, homodimer. Requires Mg(2+) as cofactor. The cofactor is Mn(2+).

The protein resides in the cytoplasm. It catalyses the reaction (2R,3S)-3-isopropylmalate + NAD(+) = 4-methyl-2-oxopentanoate + CO2 + NADH. It functions in the pathway amino-acid biosynthesis; L-leucine biosynthesis; L-leucine from 3-methyl-2-oxobutanoate: step 3/4. Catalyzes the oxidation of 3-carboxy-2-hydroxy-4-methylpentanoate (3-isopropylmalate) to 3-carboxy-4-methyl-2-oxopentanoate. The product decarboxylates to 4-methyl-2 oxopentanoate. The protein is 3-isopropylmalate dehydrogenase (LEU2) of Kluyveromyces marxianus (Yeast).